The chain runs to 438 residues: Argininosuccinate lyase (438 aa).

The protein belongs to the lyase 1 family. Argininosuccinate lyase subfamily.

It localises to the cytoplasm. It carries out the reaction 2-(N(omega)-L-arginino)succinate = fumarate + L-arginine. It functions in the pathway amino-acid biosynthesis; L-arginine biosynthesis; L-arginine from L-ornithine and carbamoyl phosphate: step 3/3. The protein is Argininosuccinate lyase of Clostridium kluyveri (strain NBRC 12016).